Here is a 262-residue protein sequence, read N- to C-terminus: Small ribosomal subunit protein eS1 (262 aa).

Positions 234–251 (DPKEDSGKNVKSLPESKE) are enriched in basic and acidic residues. The tract at residues 234–262 (DPKEDSGKNVKSLPESKEATNILTAELKH) is disordered.

This sequence belongs to the eukaryotic ribosomal protein eS1 family. In terms of assembly, component of the small ribosomal subunit. Mature ribosomes consist of a small (40S) and a large (60S) subunit. The 40S subunit contains about 33 different proteins and 1 molecule of RNA (18S). The 60S subunit contains about 49 different proteins and 3 molecules of RNA (25S, 5.8S and 5S).

It localises to the cytoplasm. The polypeptide is Small ribosomal subunit protein eS1 (Plasmodium yoelii yoelii).